The following is a 340-amino-acid chain: uncharacterized protein (340 aa).

The next 2 helical transmembrane spans lie at 162–182 (PLVPLVAGPLPVAFFIGVLAG) and 239–259 (FWISLYFPLTMRSLCNAIVVP).

Its subcellular location is the cell membrane. This is an uncharacterized protein from Mycobacterium bovis (strain ATCC BAA-935 / AF2122/97).